The sequence spans 239 residues: Ribosomal RNA small subunit methyltransferase G (239 aa).

S-adenosyl-L-methionine contacts are provided by residues Gly77, Phe82, 128 to 129, and Arg146; that span reads AE. The segment at 217-239 is disordered; that stretch reads RRQTSKKYPRKPGTPNKSPLVES.

The protein belongs to the methyltransferase superfamily. RNA methyltransferase RsmG family.

The protein resides in the cytoplasm. Its function is as follows. Specifically methylates the N7 position of guanine in position 535 of 16S rRNA. This is Ribosomal RNA small subunit methyltransferase G from Staphylococcus epidermidis (strain ATCC 12228 / FDA PCI 1200).